The primary structure comprises 376 residues: N-acetyldiaminopimelate deacetylase (376 aa).

Aspartate 69 is a catalytic residue. The Proton acceptor role is filled by glutamate 128.

Belongs to the peptidase M20A family. N-acetyldiaminopimelate deacetylase subfamily.

The enzyme catalyses N-acetyl-(2S,6S)-2,6-diaminopimelate + H2O = (2S,6S)-2,6-diaminopimelate + acetate. Its pathway is amino-acid biosynthesis; L-lysine biosynthesis via DAP pathway; LL-2,6-diaminopimelate from (S)-tetrahydrodipicolinate (acetylase route): step 3/3. Catalyzes the conversion of N-acetyl-diaminopimelate to diaminopimelate and acetate. The chain is N-acetyldiaminopimelate deacetylase from Bacillus cereus (strain AH820).